An 885-amino-acid polypeptide reads, in one-letter code: DNA polymerase eta (885 aa).

One can recognise a UmuC domain in the interval 18–274 (VLLVDMDCFF…LPVGKIKGLG (257 aa)). Residues Asp-22 and Met-23 each coordinate Mg(2+). 2 residues coordinate Mn(2+): Asp-22 and Met-23. Arg-70 lines the a 2'-deoxyribonucleoside 5'-triphosphate pocket. Mg(2+)-binding residues include Asp-125 and Glu-126. Mn(2+) is bound by residues Asp-125 and Glu-126. Residue Glu-126 is part of the active site. Disordered stretches follow at residues 599–653 (AIEA…DLYV) and 658–677 (VPPT…RKFD). The segment covering 608–618 (FEEDTEEETEL) has biased composition (acidic residues). Over residues 628 to 649 (EGQSSDAGQEQDPNTLNDSTGN) the composition is skewed to polar residues. A UBZ3-type 1 zinc finger spans residues 701–737 (DILPTIKCDQCGANIPDEVKSLQTHRDHHFAQELSRT). Residues Cys-708, Cys-711, His-725, and His-729 each contribute to the Zn(2+) site. The interval 722 to 783 (LQTHRDHHFA…YSTAPPSNSI (62 aa)) is disordered. Residues 739–748 (RSTEREERTQ) are compositionally biased toward basic and acidic residues. Residues 766-780 (TAGSGSSSYSTAPPS) are compositionally biased toward low complexity. The UBZ3-type 2 zinc-finger motif lies at 798-832 (SDPQMNQCPECKAFIKCVDMPEHLDYHVARNLQRE). Zn(2+) contacts are provided by Cys-805, Cys-808, His-820, and His-824. The tract at residues 846–870 (NKEKISPVQPKKQSQKKLNSTISAS) is disordered.

It belongs to the DNA polymerase type-Y family. Interacts (via C-terminus) with nopo. The cofactor is Mg(2+). Mn(2+) is required as a cofactor. In terms of processing, ubiquitination enhanced by nopo. In terms of tissue distribution, expressed in ovaries and testes.

The protein resides in the nucleus. It carries out the reaction DNA(n) + a 2'-deoxyribonucleoside 5'-triphosphate = DNA(n+1) + diphosphate. The enzyme in complex with the DNA substrate binds a third divalent metal cation. This binding is essential for catalyzing the DNA synthesis. Functionally, DNA polymerase specifically involved in the DNA repair by translesion synthesis (TLS). Plays an important role in translesion synthesis, where the normal high-fidelity DNA polymerases cannot proceed and DNA synthesis stalls. Inserts one or 2 nucleotide(s) opposite the lesion. During homologous recombination (HR) repair, has a overlapping role with the error-prone translesion polymerase PolZ1/DNApol-zeta to initiate repair synthesis that is completed by end joining or another polymerase that can bind and reinitiate synthesis. Particularly important for the repair of UV-induced pyrimidine dimers and for hydroxyurea (HU)-induced DNA damage. Although inserts the correct base, may cause base transitions and transversions depending upon the context. Forms a Schiff base with 5'-deoxyribose phosphate at abasic sites, but does not have any lyase activity, preventing the release of the 5'-deoxyribose phosphate (5'-dRP) residue. This covalent trapping of the enzyme by the 5'-dRP residue inhibits its DNA synthetic activity during base excision repair, thereby avoiding high incidence of mutagenesis. The sequence is that of DNA polymerase eta from Drosophila melanogaster (Fruit fly).